Consider the following 252-residue polypeptide: Vacuolar-sorting protein dot2 (252 aa).

The protein belongs to the SNF8 family. Component of the endosomal sorting complex required for transport II (ESCRT-II).

Its subcellular location is the cytoplasm. The protein resides in the nucleus. It localises to the endosome membrane. Its function is as follows. Component of the endosomal sorting complex required for transport II (ESCRT-II), which is required for multivesicular body (MVB) formation and sorting of endosomal cargo proteins into MVBs. The MVB pathway mediates delivery of transmembrane proteins into the lumen of the lysosome for degradation. The ESCRT-II complex is probably involved in the recruitment of the ESCRT-III complex. Negatively regulates meiotic spindle pole body maturation via indirect regulation of the pcp1 gene. Required for efficient entry into pre-meiotic S phase. The sequence is that of Vacuolar-sorting protein dot2 (dot2) from Schizosaccharomyces pombe (strain 972 / ATCC 24843) (Fission yeast).